Consider the following 675-residue polypeptide: Polyamine deacetylase HDAC10 (675 aa).

Substrate is bound at residue aspartate 22. A Substrate specificity motif is present at residues 23–26; the sequence is PACE. Aspartate 94 serves as a coordination point for substrate. Histidine 137 (proton donor/acceptor) is an active-site residue. Zn(2+) is bound by residues aspartate 174, histidine 176, and aspartate 267. Position 307 (tyrosine 307) interacts with substrate. Positions 362 to 399 are disordered; it reads LAQSETNPKRPRLDATNGGPKESSEPASESNPKKTAQD.

This sequence belongs to the histone deacetylase family. HD type 2 subfamily.

The protein resides in the cytoplasm. It is found in the nucleus. The enzyme catalyses N(8)-acetylspermidine + H2O = spermidine + acetate. It carries out the reaction N-acetylputrescine + H2O = putrescine + acetate. The catalysed reaction is N-acetylcadaverine + H2O = cadaverine + acetate. In terms of biological role, polyamine deacetylase (PDAC), which acts preferentially on N(8)-acetylspermidine, and also on acetylcadaverine and acetylputrescine. Exhibits attenuated catalytic activity toward N(1),N(8)-diacetylspermidine and very low activity, if any, toward N(1)-acetylspermidine. Has a very weak lysine deacetylase, if any. This chain is Polyamine deacetylase HDAC10 (hdac10), found in Danio rerio (Zebrafish).